A 700-amino-acid chain; its full sequence is MARDVLTDLTKVRNIGIMAHIDAGKTTTTERILYYTGITYKIGEVHDGAATMDWMEEEQKRGITITSAATTTFWGDNQINIIDTPGHVDFTVEVERSLRVLDGAVAVFDGKEGVEPQSEQVWRQADKYEVPRICFVNKMDKLGADFYYTVRTIEERLAAKPLVLQLPIGSESDFQGVVDLVRMKALTWRGEVKKGEDYAVEDIPAELADEAAKYREQLVEAVAETDEALMEAYFGGEELTEEQIKNGIRKLTINREAFPVLCGTAFKNKGVQPMLDAVVDYLPSPLDVPPVQGLLPDGETAAERKPSTQEPFAALVSKISVHPFFGKLTYVRVYSGKVSSGTQVINSTKERKERIGKMFQMHSNKENPVDEIQAGHIYAVIGLKDTTTGDTLCDPQNPIVLESMTFPAPVIEVAIEPKTKADQEKLSTAIQKLAEEDPTFQVKLDDETGQTIIKGMGELHLEVLVNRMKSDFKVEANIGKPQVAYRETIRKTVEKYEYTHKKQTGGSGQFARVIISLEPIEQSADSATYEFENKVTGGRVPREYIPSVDQGAQDAMQYGVLAGYPLVGIKVTLLDGQYHEVDSSEMAFKIAGSIAMKEAAAKASPALLEPIMAVEVTTPEDYMGDVIGDLNSRRGHIQAMEERSGVRVVKAQVPLSEMFGYVGDLRSKTQGRANYSMVFDSYAEVPANVAKEIIAKATGE.

The region spanning 10–286 is the tr-type G domain; it reads TKVRNIGIMA…AVVDYLPSPL (277 aa). GTP is bound by residues 19–26, 83–87, and 137–140; these read AHIDAGKT, DTPGH, and NKMD.

Belongs to the TRAFAC class translation factor GTPase superfamily. Classic translation factor GTPase family. EF-G/EF-2 subfamily.

It localises to the cytoplasm. Catalyzes the GTP-dependent ribosomal translocation step during translation elongation. During this step, the ribosome changes from the pre-translocational (PRE) to the post-translocational (POST) state as the newly formed A-site-bound peptidyl-tRNA and P-site-bound deacylated tRNA move to the P and E sites, respectively. Catalyzes the coordinated movement of the two tRNA molecules, the mRNA and conformational changes in the ribosome. The chain is Elongation factor G from Saccharopolyspora erythraea (strain ATCC 11635 / DSM 40517 / JCM 4748 / NBRC 13426 / NCIMB 8594 / NRRL 2338).